Consider the following 659-residue polypeptide: Cytochrome bo(3) ubiquinol oxidase subunit 1 (659 aa).

The Extracellular segment spans residues 1-14 (MFGKLSLNSIPYHD). A helical membrane pass occupies residues 15–35 (PIIMITCCVVILVFLVISIII). Over 36 to 56 (TIAQKWQYLWNEWCCTVDHKK) the chain is Cytoplasmic. Residues 57-77 (IAKMYIFLAFIMLFRGFADAI) form a helical membrane-spanning segment. A ubiquinone contacts are provided by R71, D75, and H101. Topologically, residues 78–109 (MMRMQQFLVSSYHGNGTGFLPPHHYDQIFTAH) are extracellular. H109 contacts heme b. Residues 110 to 130 (GVIMIFFVAMPLVIGLMNFVV) form a helical membrane-spanning segment. Topologically, residues 131–148 (PLQIGSRDVAFPFLNNLS) are cytoplasmic. A helical transmembrane segment spans residues 149 to 169 (LWLTIFSALLMNVSLGIGEFA). The Extracellular portion of the chain corresponds to 170–192 (QTGWLAYPPLSELQYSPGVGVDY). Residue W173 participates in heme b binding. Residues 193–213 (WIWSLQISGIGTTLTAINFLV) traverse the membrane as a helical segment. The Cytoplasmic portion of the chain corresponds to 214–235 (TIIKMRSSGMNWFKIPVFTWTS). The helical transmembrane segment at 236–256 (FCTNILIIASFPVLTVSLLLL) threads the bilayer. Over 257-280 (TLDRYLGFHFFTNDFGGNMMMYVN) the chain is Extracellular. Residues 281–301 (LIWIWGHPEVYILILPVFGIF) traverse the membrane as a helical segment. H287 serves as a coordination point for Cu(2+). A cross-link (1'-histidyl-3'-tyrosine (His-Tyr)) is located at residues 287–291 (HPEVY). Y291 is a binding site for Fe(II)-heme o. Residues 302 to 318 (SEVVATFSSKELFGYTS) are Cytoplasmic-facing. The helical transmembrane segment at 319 to 339 (LIWATIVITILSFIVWLHHFF) threads the bilayer. Cu(2+) contacts are provided by H336 and H337. The Extracellular portion of the chain corresponds to 340–350 (TMGASANVNAF). The chain crosses the membrane as a helical span at residues 351 to 371 (FGITTMIISIPTGVKIFNWLF). Residues 372-382 (TMYRGNVRINS) lie on the Cytoplasmic side of the membrane. Residues 383–403 (IMLWTIGFLITFSIGGMAGVL) form a helical membrane-spanning segment. Over 404–416 (LSLPVIDFSLHNS) the chain is Extracellular. Positions 414 and 422 each coordinate Fe(II)-heme o. Residues 417-437 (LFLVAHFHNVIIGGVVFGCFA) form a helical membrane-spanning segment. H424 is a binding site for heme b. At 438–459 (GITYWFPKLFGFMLSEKWGKRA) the chain is on the cytoplasmic side. Residues 460–480 (FWCWFFGFFCAFMPLYALGLM) form a helical membrane-spanning segment. The Extracellular portion of the chain corresponds to 481-499 (GMTRRLSQNINPQFHSMLT). Heme b is bound by residues R484 and R485. Residues 500–520 (IAALGTILIFIGIVFQIIQIF) traverse the membrane as a helical segment. Residues 521–587 (VSIRDRNLNR…KLPILYTSFH (67 aa)) are Cytoplasmic-facing. The chain crosses the membrane as a helical span at residues 588–608 (MPKNTKFGFLIGFFAFLLGFS). A topological domain (extracellular) is located at residue A609. Residues 610–630 (VWYIFWLFFISFFVIIYLLVI) traverse the membrane as a helical segment. The Cytoplasmic portion of the chain corresponds to 631-659 (KSLDTNCDYIISIEEIKEIEKCINIKKMD).

The protein belongs to the heme-copper respiratory oxidase family. In terms of assembly, the cytochrome bo(3) ubiquinol oxidase complex is a heterooctamer of two A chains, two B chains, two C chains and two D chains. It depends on Cu(2+) as a cofactor. Requires heme b as cofactor. Fe(II)-heme o serves as cofactor.

Its subcellular location is the cell membrane. It catalyses the reaction 2 a ubiquinol + O2 + n H(+)(in) = 2 a ubiquinone + 2 H2O + n H(+)(out). Cytochrome bo(3) ubiquinol oxidase is the terminal enzyme in the aerobic respiratory chain. Catalyzes the four-electron reduction of O2 to water, using a ubiquinol as a membrane soluble electron donor for molecular oxygen reduction. Has proton pump activity across the membrane in addition to electron transfer, pumping 2 protons/electron and generating a proton motive force. All the redox centers of this enzyme complex are located within the largest subunit, subunit I. Protons are probably pumped via D- and K- channels found in this subunit. The sequence is that of Cytochrome bo(3) ubiquinol oxidase subunit 1 (cyoB) from Buchnera aphidicola subsp. Baizongia pistaciae (strain Bp).